The sequence spans 220 residues: Probable cutinase 5 (220 aa).

The signal sequence occupies residues 1-18 (MVALHTLLLTAFAAVSLA). 2 disulfide bridges follow: C42-C121 and C68-C82. The Nucleophile role is filled by S132. A disulfide bond links C183 and C190. D187 is an active-site residue. H200 serves as the catalytic Proton donor/acceptor.

This sequence belongs to the cutinase family.

It is found in the secreted. It catalyses the reaction cutin + H2O = cutin monomers.. Catalyzes the hydrolysis of complex carboxylic polyesters found in the cell wall of plants. Degrades cutin, a macromolecule that forms the structure of the plant cuticle. The polypeptide is Probable cutinase 5 (Aspergillus terreus (strain NIH 2624 / FGSC A1156)).